Consider the following 492-residue polypeptide: Catalase (492 aa).

Active-site residues include His65 and Asn138. A heme-binding site is contributed by Tyr348.

It belongs to the catalase family. Homotetramer. The cofactor is heme.

It is found in the cytoplasm. It localises to the cytosol. Its subcellular location is the peroxisome matrix. The enzyme catalyses 2 H2O2 = O2 + 2 H2O. In terms of biological role, catalyzes the degradation of hydrogen peroxide (H(2)O(2)) generated by peroxisomal oxidases to water and oxygen, thereby protecting cells from the toxic effects of hydrogen peroxide. This Vigna radiata var. radiata (Mung bean) protein is Catalase.